The following is a 216-amino-acid chain: Ras-related protein RabN1 (216 aa).

A GTP-binding site is contributed by 15-22; it reads GDYNSGKT. An Effector region motif is present at residues 37 to 44; that stretch reads TCPSTFDL. Residues 62–66 and 128–131 contribute to the GTP site; these read DTAGQ and TKSD. C216 is lipidated: S-geranylgeranyl cysteine.

The protein belongs to the small GTPase superfamily. Rab family.

The protein localises to the cell membrane. In Dictyostelium discoideum (Social amoeba), this protein is Ras-related protein RabN1 (rabN1).